We begin with the raw amino-acid sequence, 68 residues long: Protein DsrB (68 aa).

It belongs to the DsrB family.

This Sodalis glossinidius (strain morsitans) protein is Protein DsrB.